The chain runs to 1270 residues: DNA-directed RNA polymerase subunit beta (1270 aa).

This sequence belongs to the RNA polymerase beta chain family. As to quaternary structure, the RNAP catalytic core consists of 2 alpha, 1 beta, 1 beta' and 1 omega subunit. When a sigma factor is associated with the core the holoenzyme is formed, which can initiate transcription.

The enzyme catalyses RNA(n) + a ribonucleoside 5'-triphosphate = RNA(n+1) + diphosphate. Its function is as follows. DNA-dependent RNA polymerase catalyzes the transcription of DNA into RNA using the four ribonucleoside triphosphates as substrates. The sequence is that of DNA-directed RNA polymerase subunit beta from Bacteroides thetaiotaomicron (strain ATCC 29148 / DSM 2079 / JCM 5827 / CCUG 10774 / NCTC 10582 / VPI-5482 / E50).